A 1100-amino-acid chain; its full sequence is DNA repair protein RAD1 (1100 aa).

The disordered stretch occupies residues 1–47 (MSQLFYQGDSDDELQEELTRQTTQASQSSKIKNEDEPDDSNHLNEVE). A compositionally biased stretch (polar residues) spans 20–30 (RQTTQASQSSK). Residues 31–47 (IKNEDEPDDSNHLNEVE) are compositionally biased toward basic and acidic residues. Serine 613 is modified (phosphoserine). The region spanning 821–901 (VVIVDTREFN…YPTLLIEFDE (81 aa)) is the ERCC4 domain. Residues 1063-1100 (EKEEQEQESTDENLESPGKTTDDNALHDHHNDVPEAPV) are disordered. The span at 1065–1076 (EEQEQESTDENL) shows a compositional bias: acidic residues. Serine 1071 is modified (phosphoserine). Phosphothreonine is present on threonine 1072. Residues 1082-1100 (TTDDNALHDHHNDVPEAPV) show a composition bias toward basic and acidic residues.

It belongs to the XPF family. Component of the nucleotide excision repair factor 1 (NEF1) complex consisting of RAD1, RAD10 and RAD14. Interacts with SAW1.

It localises to the nucleus. Involved in nucleotide excision repair of DNA damaged with UV light, bulky adducts, or cross-linking agents. Along with RAD10 forms an endonuclease that specifically degrades single-stranded DNA. The sequence is that of DNA repair protein RAD1 (RAD1) from Saccharomyces cerevisiae (strain ATCC 204508 / S288c) (Baker's yeast).